A 374-amino-acid polypeptide reads, in one-letter code: MTMMIITVFLTVIAAVLAILVKNSQTGSGIFAPPEISGSRDVFPSAKVVNLTGASGPESIAFDPAGEGPYVGVSDGRILKWRGEPLGWSDFAHTSSNRQECARPFAPELEHVCGRPLGLRFDKKTGDLYIADAYFGLLVVGPAGGLAKPLVTEAEGQPFRFTNDLDIDEQEDVIYFTDTSARFQRRQFLAAVLNVDKTGRFIKYDRSSKKATVLLQGLAFANGVALSKDRSFVLVVETTTCKILRLWLSGPNAGTHQVFAELPGFPDNIRRNSNGEFWVALHSKKGLFAKLSLTQTWFRDLVLRLPISPQRLHSLFTGGIPHATAIKLSESGKVLEVLEDKEGKTLRFISEVEEKDGKLWIGSVLVPFLGVYDL.

Positions 1–18 (MTMMIITVFLTVIAAVLA) are cleaved as a signal peptide. N-linked (GlcNAc...) asparagine glycosylation is present at Asn50.

The protein belongs to the strictosidine synthase family.

Its subcellular location is the vacuole. The polypeptide is Protein STRICTOSIDINE SYNTHASE-LIKE 10 (Arabidopsis thaliana (Mouse-ear cress)).